A 415-amino-acid polypeptide reads, in one-letter code: Serine/threonine transporter SstT (415 aa).

8 consecutive transmembrane segments (helical) span residues 21-41 (ILLG…AALA), 45-65 (LGTL…LVLV), 85-105 (FLYL…SVLF), 142-162 (ALLN…GIAF), 193-213 (LGIF…ALWG), 217-237 (LLMV…PLIV), 289-309 (VAIP…ITVL), and 331-351 (VVAS…LLLI).

Belongs to the dicarboxylate/amino acid:cation symporter (DAACS) (TC 2.A.23) family.

It localises to the cell inner membrane. It catalyses the reaction L-serine(in) + Na(+)(in) = L-serine(out) + Na(+)(out). The enzyme catalyses L-threonine(in) + Na(+)(in) = L-threonine(out) + Na(+)(out). Involved in the import of serine and threonine into the cell, with the concomitant import of sodium (symport system). The chain is Serine/threonine transporter SstT from Pectobacterium atrosepticum (strain SCRI 1043 / ATCC BAA-672) (Erwinia carotovora subsp. atroseptica).